Here is a 465-residue protein sequence, read N- to C-terminus: ATP-dependent rRNA helicase rrp3 (465 aa).

The span at methionine 1–glutamate 22 shows a compositional bias: basic and acidic residues. Residues methionine 1 to alanine 44 form a disordered region. Positions threonine 23–asparagine 36 are enriched in low complexity. Residues lysine 46–glutamine 74 carry the Q motif motif. The Helicase ATP-binding domain occupies isoleucine 77–valine 248. Alanine 90–threonine 97 is an ATP binding site. The short motif at aspartate 196 to aspartate 199 is the DEAD box element. The 145-residue stretch at tyrosine 275–phenylalanine 419 folds into the Helicase C-terminal domain. The span at arginine 442–arginine 453 shows a compositional bias: basic residues. Residues arginine 442–tyrosine 465 form a disordered region. Residues lysine 454–tyrosine 465 show a composition bias toward basic and acidic residues.

It belongs to the DEAD box helicase family. DDX47/RRP3 subfamily. In terms of assembly, interacts with the SSU processome.

Its subcellular location is the nucleus. The enzyme catalyses ATP + H2O = ADP + phosphate + H(+). In terms of biological role, ATP-dependent rRNA helicase required for pre-ribosomal RNA processing. Involved in the maturation of the 35S-pre-rRNA and to its cleavage to mature 18S rRNA. The chain is ATP-dependent rRNA helicase rrp3 from Schizosaccharomyces pombe (strain 972 / ATCC 24843) (Fission yeast).